The primary structure comprises 241 residues: Nuclear receptor-interacting protein 3 (241 aa).

This chain is Nuclear receptor-interacting protein 3 (NRIP3), found in Homo sapiens (Human).